A 259-amino-acid chain; its full sequence is Phosphate import ATP-binding protein PstB 1 (259 aa).

An ABC transporter domain is found at 13–254 (IQVRGLEFFY…PSKTQTEDYI (242 aa)). Residue 45–52 (GPSGCGKS) participates in ATP binding.

Belongs to the ABC transporter superfamily. Phosphate importer (TC 3.A.1.7) family. In terms of assembly, the complex is composed of two ATP-binding proteins (PstB), two transmembrane proteins (PstC and PstA) and a solute-binding protein (PstS).

The protein resides in the cell inner membrane. It catalyses the reaction phosphate(out) + ATP + H2O = ADP + 2 phosphate(in) + H(+). In terms of biological role, part of the ABC transporter complex PstSACB involved in phosphate import. Responsible for energy coupling to the transport system. This chain is Phosphate import ATP-binding protein PstB 1, found in Pseudomonas syringae pv. tomato (strain ATCC BAA-871 / DC3000).